We begin with the raw amino-acid sequence, 359 residues long: Probable tyrosine-protein phosphatase pir-2 (359 aa).

One can recognise a Tyrosine-protein phosphatase domain in the interval 16 to 191 (QPVGNVIPRT…AKDKRDKQVD (176 aa)). Residue Cys131 is the Phosphocysteine intermediate of the active site. Over residues 184–199 (DKRDKQVDSDSDSSER) the composition is skewed to basic and acidic residues. Disordered regions lie at residues 184–211 (DKRDKQVDSDSDSSERQRKKKNKRKHRE), 234–259 (SVSGTDYQNSPNGVSVDPGQPQPHHW), and 274–328 (PVAN…RNRM). Basic residues predominate over residues 200–210 (QRKKKNKRKHR). Positions 234–246 (SVSGTDYQNSPNG) are enriched in polar residues. Over residues 290 to 309 (PQEEEEFEEDFEEIEEETET) the composition is skewed to acidic residues. A compositionally biased stretch (basic residues) spans 319–328 (SKRRARRNRM).

The protein belongs to the protein-tyrosine phosphatase family. Non-receptor class CDC14 subfamily.

The catalysed reaction is O-phospho-L-tyrosyl-[protein] + H2O = L-tyrosyl-[protein] + phosphate. The sequence is that of Probable tyrosine-protein phosphatase pir-2 from Caenorhabditis elegans.